Here is a 906-residue protein sequence, read N- to C-terminus: Formin-like protein 18 (906 aa).

A signal peptide spans 1 to 25; the sequence is MSKLRWLIMAFLVCLLLLTPKDLEG. A helical membrane pass occupies residues 120–140; the sequence is MVVVGLSAACVALVTLVGICF. 2 disordered regions span residues 267 to 416 and 854 to 906; these read AGGG…QADP and NAKA…DSDD. The segment covering 274–292 has biased composition (pro residues); sequence AAPPPPAGPPPPAPPPLPP. A compositionally biased stretch (basic residues) spans 293 to 303; that stretch reads SHHHHHGHHPP. Composition is skewed to pro residues over residues 320–339, 348–375, and 383–402; these read APPPPPAHPAAPAPPPPAPS, GPPPPPPPAAPAAPRPPGPGPGPPPPPG, and GPPPPALPGGPRARGPPPFK. Composition is skewed to low complexity over residues 403-416 and 854-877; these read KSPGAAAAAAQADP and NAKAKKQQQPTPAPRSRQSSQSSF. Positions 411-866 constitute an FH2 domain; the sequence is AAQADPNKAK…AKKQQQPTPA (456 aa). A compositionally biased stretch (basic and acidic residues) spans 878–889; the sequence is RDPRQQIQDRRA. The segment covering 897–906 has biased composition (low complexity); the sequence is SSSSSSDSDD.

Belongs to the formin-like family. Class-I subfamily.

It is found in the membrane. The protein is Formin-like protein 18 (FH18) of Oryza sativa subsp. japonica (Rice).